The primary structure comprises 331 residues: Neurogenic differentiation factor 4 (331 aa).

The tract at residues 1–80 (MSKTFVKSKE…GPKKKKMTKA (80 aa)) is disordered. The segment covering 52–64 (DSIEEEEEEEEDG) has biased composition (acidic residues). Residues 67-79 (PKRRGPKKKKMTK) are compositionally biased toward basic residues. In terms of domain architecture, bHLH spans 87-139 (ARRVKANARERTRMHGLNDALDNLRRVMPCYSKTQKLSKIETLRLARNYIWAL). The interval 246–265 (TPPYEGPLTPPLSISGNFSL) is disordered.

In terms of assembly, efficient DNA binding requires dimerization with another bHLH protein. Post-translationally, serine or threonine phosphorylation within the basic region may regulate neurogenic activity.

It localises to the nucleus. Probably acts as a transcriptional activator. Mediates neuronal differentiation. Required for the regulation of amacrine cell fate specification in the retina. This is Neurogenic differentiation factor 4 (NEUROD4) from Homo sapiens (Human).